The primary structure comprises 269 residues: MVRVAIAGAAGRMGRNLIKAVNGSQYAVLAAASEHPESSLIGVDVGEMAGLGKSGIVIVDDLAKAVDDFDVIIDFTLPISTLKNIELCQEHNKAIVIGTTGFSEPGKELIDQAAKEIPIVMAPNYSVGVNVVFKLLEKAAKIMGDYCDIEIIEAHHRYKVDAPSGTAIGMGEAIAGAMGNKLDDVAVYTREGITGERTKNEIGFATIRAGDIVGEHTAMFADIGERVEITHKATDRMTFANGAVRASHWLHQKSPGFYTMHDVLDLDQI.

NAD(+) is bound by residues 8 to 13 (GAAGRM), E34, 98 to 100 (GTT), and 122 to 125 (APNY). The Proton donor/acceptor role is filled by H155. Residue H156 coordinates (S)-2,3,4,5-tetrahydrodipicolinate. The active-site Proton donor is K159. (S)-2,3,4,5-tetrahydrodipicolinate is bound at residue 165–166 (GT).

The protein belongs to the DapB family.

It localises to the cytoplasm. It catalyses the reaction (S)-2,3,4,5-tetrahydrodipicolinate + NAD(+) + H2O = (2S,4S)-4-hydroxy-2,3,4,5-tetrahydrodipicolinate + NADH + H(+). The catalysed reaction is (S)-2,3,4,5-tetrahydrodipicolinate + NADP(+) + H2O = (2S,4S)-4-hydroxy-2,3,4,5-tetrahydrodipicolinate + NADPH + H(+). It participates in amino-acid biosynthesis; L-lysine biosynthesis via DAP pathway; (S)-tetrahydrodipicolinate from L-aspartate: step 4/4. In terms of biological role, catalyzes the conversion of 4-hydroxy-tetrahydrodipicolinate (HTPA) to tetrahydrodipicolinate. The sequence is that of 4-hydroxy-tetrahydrodipicolinate reductase from Aliivibrio salmonicida (strain LFI1238) (Vibrio salmonicida (strain LFI1238)).